The chain runs to 831 residues: Multiphosphoryl transfer protein 1 (831 aa).

The HPr domain maps to 1–90; it reads MLTIQFLCPL…EYIQVRFIDS (90 aa). His-15 functions as the Pros-phosphohistidine intermediate; for HPr activity in the catalytic mechanism. His-15 is subject to Phosphohistidine; by EI. Residues 119–650 form a PTS EI region; that stretch reads GNVLASGVGV…AVKSQLRQLD (532 aa). The Tele-phosphohistidine intermediate; for PTS EI activity role is filled by His-298. His-298 is modified (phosphohistidine; by autocatalysis). Arg-405 and Arg-441 together coordinate phosphoenolpyruvate. Residues Glu-540 and Asp-564 each contribute to the Mg(2+) site. Residues 563–564 and Arg-574 each bind phosphoenolpyruvate; that span reads ND. Cys-611 acts as the Proton donor; for EI activity in catalysis. Residues 685 to 828 enclose the PTS EIIA type-2 domain; that stretch reads PLLALENIFV…QSILTLLETE (144 aa). Catalysis depends on His-747, which acts as the Tele-phosphohistidine intermediate; for PTS EIIA activity. Phosphohistidine; by HPr is present on His-747.

This sequence belongs to the PEP-utilizing enzyme family. Mg(2+) is required as a cofactor.

It is found in the cytoplasm. It catalyses the reaction L-histidyl-[protein] + phosphoenolpyruvate = N(pros)-phospho-L-histidyl-[protein] + pyruvate. It carries out the reaction D-fructose(out) + N(pros)-phospho-L-histidyl-[protein] = D-fructose 1-phosphate(in) + L-histidyl-[protein]. Multifunctional protein that includes general (non sugar-specific) and sugar-specific components of the phosphoenolpyruvate-dependent sugar phosphotransferase system (sugar PTS). This major carbohydrate active transport system catalyzes the phosphorylation of incoming sugar substrates concomitantly with their translocation across the cell membrane. The enzyme II FryABC PTS system is involved in fructose transport. The sequence is that of Multiphosphoryl transfer protein 1 (fryA) from Escherichia coli (strain K12).